Here is a 365-residue protein sequence, read N- to C-terminus: Zinc finger TRAF-type-containing protein 1-B (365 aa).

The segment at 1–56 (MSEEREAPGPLASSSAGLGAEVGQEEVPGGAGPARLLLLPSDSDGPPKKRLRSEAE) is disordered. The RING-type; degenerate zinc finger occupies 72 to 117 (CAVCLDLPKASVYQCTNGHLMCAGCFIHLLADARLKEEQATCPNCR). A TRAF-type zinc finger spans residues 113–186 (CPNCRCEISK…PWQGPYHELT (74 aa)).

Belongs to the ZFTRAF1 family. Interacts with LGALS3.

Its subcellular location is the cytoplasm. The sequence is that of Zinc finger TRAF-type-containing protein 1-B from Xenopus laevis (African clawed frog).